The sequence spans 621 residues: Autonomous transposable element EN-1 mosaic protein (621 aa).

Disordered regions lie at residues 1-119 (MFRM…PPRR), 428-447 (YTRRSNFSAGSNRPRRPSAR), 498-530 (QQPPIITHPVSGQSSDRSTAAADGSQGSATSVQ), and 549-621 (RQPG…PPTE). Polar residues-rich tracts occupy residues 27–39 (EGTTTSRSRQEQL) and 47–61 (RGSSGPSNTEGTTSR). The span at 82 to 102 (AAVDAEAEEAAAELDDGEETS) shows a compositional bias: acidic residues. Over residues 570 to 594 (PPRGQSQSPGLPSHSPGSGSGSHHA) the composition is skewed to low complexity.

This protein has most probably three functions; the mutator (M) function, for excision and transposition; the suppressor (S) function, which inhibits residual gene activity of certain alleles in which inhibitor elements are integrated; an activator (A) function is proposed, because inactive SPM can be activated by a second SPM. The sequence is that of Autonomous transposable element EN-1 mosaic protein from Zea mays (Maize).